We begin with the raw amino-acid sequence, 420 residues long: D-tagatose-1,6-bisphosphate aldolase subunit GatZ (420 aa).

It belongs to the GatZ/KbaZ family. GatZ subfamily. In terms of assembly, forms a complex with GatY.

The protein operates within carbohydrate metabolism; D-tagatose 6-phosphate degradation; D-glyceraldehyde 3-phosphate and glycerone phosphate from D-tagatose 6-phosphate: step 2/2. Its function is as follows. Component of the tagatose-1,6-bisphosphate aldolase GatYZ that is required for full activity and stability of the Y subunit. Could have a chaperone-like function for the proper and stable folding of GatY. When expressed alone, GatZ does not show any aldolase activity. Is involved in the catabolism of galactitol. The chain is D-tagatose-1,6-bisphosphate aldolase subunit GatZ from Escherichia coli O7:K1 (strain IAI39 / ExPEC).